Here is a 137-residue protein sequence, read N- to C-terminus: Large ribosomal subunit protein uL16c (137 aa).

Belongs to the universal ribosomal protein uL16 family. In terms of assembly, part of the 50S ribosomal subunit.

The protein localises to the plastid. It localises to the chloroplast. In Hordeum vulgare (Barley), this protein is Large ribosomal subunit protein uL16c.